The sequence spans 287 residues: Histone H1 (287 aa).

A compositionally biased stretch (low complexity) spans 1 to 11 (MATEEPVIVNE). Disordered regions lie at residues 1–58 (MATE…THPP) and 120–287 (YKLP…RGRK). The span at 33 to 51 (GKAKKETKAKKPAAPRKRS) shows a compositional bias: basic residues. An H15 domain is found at 55 to 124 (THPPYFEMIK…KVKNSYKLPS (70 aa)). Residues 135-202 (AKKKPAAAKS…KAKPVAKAKP (68 aa)) are compositionally biased toward basic residues. Residues 203 to 248 (KAAAAAKPKAAVKPKAAPAKTKAAVKPNLKAKTTTAKVAKTATRTT) show a composition bias toward low complexity. The span at 276–287 (PAKKATPKRGRK) shows a compositional bias: basic residues.

Belongs to the histone H1/H5 family.

It is found in the nucleus. The protein resides in the chromosome. Functionally, histones H1 are necessary for the condensation of nucleosome chains into higher-order structures. In Solanum lycopersicum (Tomato), this protein is Histone H1.